The primary structure comprises 382 residues: Caspase-1-B (382 aa).

The propeptide occupies 1-98 (MTAQLNKVRK…HEHAPSPIQE (98 aa)). Residues H216 and C270 contribute to the active site. The propeptide occupies 283-292 (DVAPAPLEDD).

The protein belongs to the peptidase C14A family. As to quaternary structure, heterotetramer that consists of two anti-parallel arranged heterodimers, each one formed by a 20 kDa (Caspase-1 subunit p20) and a 10 kDa (Caspase-1 subunit p10) subunit. Heterotetramer that consists of two anti-parallel arranged heterodimers, each one formed by a 20 kDa (Caspase-1 subunit p20) and a 10 kDa (Caspase-1 subunit p10) subunit. Can form a heterodimer with isoform epsilon which then has an inhibitory effect. Post-translationally, the two subunits are derived from the precursor sequence by an autocatalytic mechanism.

It localises to the cytoplasm. It is found in the cell membrane. It carries out the reaction Strict requirement for an Asp residue at position P1 and has a preferred cleavage sequence of Tyr-Val-Ala-Asp-|-.. In terms of biological role, thiol protease involved in a variety of inflammatory processes by proteolytically cleaving other proteins, such as the precursors of the inflammatory cytokines interleukin-1 beta (IL1B) and interleukin 18 (IL18) as well as the pyroptosis inducer Gasdermin-D (GSDMD), into active mature peptides. Plays a key role in cell immunity as an inflammatory response initiator: once activated through formation of an inflammasome complex, it initiates a pro-inflammatory response through the cleavage of the two inflammatory cytokines IL1B and IL18, releasing the mature cytokines which are involved in a variety of inflammatory processes. Cleaves a tetrapeptide after an Asp residue at position P1. Also initiates pyroptosis, a programmed lytic cell death pathway, through cleavage of GSDMD. The polypeptide is Caspase-1-B (casp1-b) (Xenopus laevis (African clawed frog)).